Reading from the N-terminus, the 255-residue chain is 1-(5-phosphoribosyl)-5-[(5-phosphoribosylamino)methylideneamino] imidazole-4-carboxamide isomerase (255 aa).

The active-site Proton acceptor is the D8. D129 serves as the catalytic Proton donor.

The protein belongs to the HisA/HisF family.

It is found in the cytoplasm. It catalyses the reaction 1-(5-phospho-beta-D-ribosyl)-5-[(5-phospho-beta-D-ribosylamino)methylideneamino]imidazole-4-carboxamide = 5-[(5-phospho-1-deoxy-D-ribulos-1-ylimino)methylamino]-1-(5-phospho-beta-D-ribosyl)imidazole-4-carboxamide. It participates in amino-acid biosynthesis; L-histidine biosynthesis; L-histidine from 5-phospho-alpha-D-ribose 1-diphosphate: step 4/9. This Prochlorococcus marinus (strain AS9601) protein is 1-(5-phosphoribosyl)-5-[(5-phosphoribosylamino)methylideneamino] imidazole-4-carboxamide isomerase.